The following is a 475-amino-acid chain: GTPase Der (475 aa).

2 EngA-type G domains span residues 3 to 167 and 205 to 380; these read LTIA…GGER and LRIA…RVWN. GTP-binding positions include 9 to 16, 56 to 60, 119 to 122, 211 to 218, 258 to 262, and 323 to 326; these read GRPNVGKS, DTAGL, NKSE, GRPNTGKS, and NKWD. The region spanning 381 to 465 is the KH-like domain; it reads RRISTGKLNR…PIRISLRASD (85 aa).

This sequence belongs to the TRAFAC class TrmE-Era-EngA-EngB-Septin-like GTPase superfamily. EngA (Der) GTPase family. Associates with the 50S ribosomal subunit.

GTPase that plays an essential role in the late steps of ribosome biogenesis. In Bartonella henselae (strain ATCC 49882 / DSM 28221 / CCUG 30454 / Houston 1) (Rochalimaea henselae), this protein is GTPase Der.